The primary structure comprises 37 residues: Large ribosomal subunit protein bL36 (37 aa).

Belongs to the bacterial ribosomal protein bL36 family.

The protein is Large ribosomal subunit protein bL36 of Francisella tularensis subsp. tularensis (strain FSC 198).